Here is a 574-residue protein sequence, read N- to C-terminus: MAFAPSVAHKPVAAAVCPVMAATEALATEGGLEARGAIFTRSEVVDFILDLAGYTEDQPLHEKRLLEPSFGGGDFLLPIIQRLLSAWRAARPNGTEVDDLGDAIRAVELHHDTFRSTYAAVVALLKREGLSANAATALADRWLSQGDFLLAPLEGQFDFVVGNPPYVRPELIPAPLLAEYRSRYQTMYDRADIYIPFIERSLTALSAGGNLGFICADRWMKNRYGGPLRSLVAERFHLKVYVDMVDTPAFHSDVIAYPAITIISREGGGATRIAHRPSIDRATLTTLAGLLSAPTLPKDAGPVRELARVTNGAEPWLLESSDQMALIRRLEGAFPLLEEAGCKVGIGVATGADKAFIGDFESLDVEPDRKLPLVTTKDIMTGEVQWRGQGVINPFAESGGLVDLGEYPRLRRYLEARRDVIAGRHCAKKAPANWYRTIDRITPALAARPKLLIPDIKGESHIVFEGGELYPSHNLYYVTSDDWDLRALQAVLLSAVSRLFVATYSTKMRGGFLRFQAQYLRRIRIPRWADVPEPLRRELAEAAIKRDVQACNRAVFRLYGLSHEERSALGGNGE.

It belongs to the N(4)/N(6)-methyltransferase family. As to quaternary structure, monomer.

It catalyses the reaction a 2'-deoxyadenosine in DNA + S-adenosyl-L-methionine = an N(6)-methyl-2'-deoxyadenosine in DNA + S-adenosyl-L-homocysteine + H(+). Its function is as follows. A gamma subtype methylase, recognizes the double-stranded sequence 5'-CTCGAG-3', methylates A-5 on both strands, and protects the DNA from cleavage by the PaeR7I endonuclease. This chain is Type II methyltransferase M.PaeR7I (paeR7IM), found in Pseudomonas aeruginosa.